We begin with the raw amino-acid sequence, 286 residues long: Pantothenate synthetase (286 aa).

30–37 (MGALHEGH) serves as a coordination point for ATP. The Proton donor role is filled by H37. Q61 is a (R)-pantoate binding site. Residue Q61 participates in beta-alanine binding. An ATP-binding site is contributed by 147 to 150 (GEKD). Residue Q153 participates in (R)-pantoate binding. ATP-binding positions include V180 and 188–191 (LSSR).

Belongs to the pantothenate synthetase family. In terms of assembly, homodimer.

It localises to the cytoplasm. It carries out the reaction (R)-pantoate + beta-alanine + ATP = (R)-pantothenate + AMP + diphosphate + H(+). The protein operates within cofactor biosynthesis; (R)-pantothenate biosynthesis; (R)-pantothenate from (R)-pantoate and beta-alanine: step 1/1. Functionally, catalyzes the condensation of pantoate with beta-alanine in an ATP-dependent reaction via a pantoyl-adenylate intermediate. This Novosphingobium aromaticivorans (strain ATCC 700278 / DSM 12444 / CCUG 56034 / CIP 105152 / NBRC 16084 / F199) protein is Pantothenate synthetase.